The following is a 408-amino-acid chain: Serine/threonine transporter SstT (408 aa).

9 consecutive transmembrane segments (helical) span residues 14–34, 43–63, 83–103, 143–163, 181–201, 219–239, 247–269, 290–310, and 332–352; these read GNLI…GIFS, IFGA…VFIL, IIFL…SISF, ALSS…GFAL, VLKI…GLVA, LIIL…LIVF, YPLI…SSAA, ISIP…IAIL, and VLAA…LLLI.

Belongs to the dicarboxylate/amino acid:cation symporter (DAACS) (TC 2.A.23) family.

The protein resides in the cell inner membrane. It catalyses the reaction L-serine(in) + Na(+)(in) = L-serine(out) + Na(+)(out). The enzyme catalyses L-threonine(in) + Na(+)(in) = L-threonine(out) + Na(+)(out). In terms of biological role, involved in the import of serine and threonine into the cell, with the concomitant import of sodium (symport system). This is Serine/threonine transporter SstT from Campylobacter lari (strain RM2100 / D67 / ATCC BAA-1060).